A 424-amino-acid polypeptide reads, in one-letter code: MEKQCCSHPVICSLSTMYTFLLGAIFIALSSSRILLVKYSANEENKYDYLPTTANVCSELVKLVFCVLVSFCVIKKDHQSRNLKYASWKEFSNFMKWSIPAFLYFLDNLIVFYVLSYLQPAMAVIFSNFSIITTALLFRIVLKRRLNWIQWASLLILFLSIVALTAGTKTLQHNLAGHGFHHDAFFSPSNSCLLFRSECPRKDNCTAKEWTFPEAKWNTTARVFSHIRLGMGHVLIIVQCFISSMANIYNEKILKEGNQLAESIFIQNSKLYFFGILFNGLTLGLQRSNRDQIKNCGFFYGHNAFSVALIFVTAFQGLSVAFILKFLDNMFHVLMAQVTTVIITTVSVLVFDFRPSLEFFLEAPSVLLSIFIYNASKPQGPEYAPRQERIRDLSGNLWERSSGDGEELERLTKPKSDESDEDTF.

Topologically, residues 1-8 (MEKQCCSH) are cytoplasmic. A helical transmembrane segment spans residues 9–29 (PVICSLSTMYTFLLGAIFIAL). The Lumenal segment spans residues 30–53 (SSSRILLVKYSANEENKYDYLPTT). A helical membrane pass occupies residues 54–74 (ANVCSELVKLVFCVLVSFCVI). At 75–93 (KKDHQSRNLKYASWKEFSN) the chain is on the cytoplasmic side. Residues 94–116 (FMKWSIPAFLYFLDNLIVFYVLS) form a helical membrane-spanning segment. The Lumenal portion of the chain corresponds to 117 to 119 (YLQ). A helical transmembrane segment spans residues 120 to 142 (PAMAVIFSNFSIITTALLFRIVL). Topologically, residues 143 to 147 (KRRLN) are cytoplasmic. The chain crosses the membrane as a helical span at residues 148-168 (WIQWASLLILFLSIVALTAGT). Topologically, residues 169 to 228 (KTLQHNLAGHGFHHDAFFSPSNSCLLFRSECPRKDNCTAKEWTFPEAKWNTTARVFSHIR) are lumenal. An N-linked (GlcNAc...) asparagine glycan is attached at Asn204. The chain crosses the membrane as a helical span at residues 229–249 (LGMGHVLIIVQCFISSMANIY). Residues 250–263 (NEKILKEGNQLAES) are Cytoplasmic-facing. A helical transmembrane segment spans residues 264–284 (IFIQNSKLYFFGILFNGLTLG). The Lumenal portion of the chain corresponds to 285–303 (LQRSNRDQIKNCGFFYGHN). The chain crosses the membrane as a helical span at residues 304–324 (AFSVALIFVTAFQGLSVAFIL). Over 325 to 330 (KFLDNM) the chain is Cytoplasmic. The chain crosses the membrane as a helical span at residues 331–351 (FHVLMAQVTTVIITTVSVLVF). At 352–354 (DFR) the chain is on the lumenal side. Residues 355-375 (PSLEFFLEAPSVLLSIFIYNA) traverse the membrane as a helical segment. At 376–424 (SKPQGPEYAPRQERIRDLSGNLWERSSGDGEELERLTKPKSDESDEDTF) the chain is on the cytoplasmic side. Phosphoserine occurs at positions 394, 416, and 419. The tract at residues 395–424 (GNLWERSSGDGEELERLTKPKSDESDEDTF) is disordered. Basic and acidic residues predominate over residues 408-417 (LERLTKPKSD).

This sequence belongs to the nucleotide-sugar transporter family. SLC35A subfamily. Probably forms homooligomers and heterooligomers with SLC35A1, SLC35A2, SLC35A3 and SLC35A4.

Its subcellular location is the golgi apparatus membrane. It carries out the reaction UMP(out) + UDP-alpha-D-glucuronate(in) = UMP(in) + UDP-alpha-D-glucuronate(out). The enzyme catalyses UMP(out) + UDP-N-acetyl-alpha-D-glucosamine(in) = UMP(in) + UDP-N-acetyl-alpha-D-glucosamine(out). It catalyses the reaction UDP-N-acetyl-alpha-D-galactosamine(in) + UMP(out) = UDP-N-acetyl-alpha-D-galactosamine(out) + UMP(in). Functionally, probable UDP-sugar:UMP transmembrane antiporter involved in UDP-alpha-D-glucuronate/UDP-GlcA, UDP-GlcNAc/UDP-N-acetyl-alpha-D-glucosamine and UDP-N-acetyl-alpha-D-galactosamine/UDP-GalNAc transport from the cytosol to the lumen of the Golgi. This chain is UDP-sugar transporter protein SLC35A5, found in Pongo abelii (Sumatran orangutan).